Consider the following 214-residue polypeptide: Urease accessory protein UreG (214 aa).

The segment at 1 to 20 (MSQLHAVPGRTKKLPPLRVG) is disordered. 23-30 (GPVGSGKT) contributes to the GTP binding site.

It belongs to the SIMIBI class G3E GTPase family. UreG subfamily. As to quaternary structure, homodimer. UreD, UreF and UreG form a complex that acts as a GTP-hydrolysis-dependent molecular chaperone, activating the urease apoprotein by helping to assemble the nickel containing metallocenter of UreC. The UreE protein probably delivers the nickel.

It is found in the cytoplasm. Functionally, facilitates the functional incorporation of the urease nickel metallocenter. This process requires GTP hydrolysis, probably effectuated by UreG. The protein is Urease accessory protein UreG of Leptothrix cholodnii (strain ATCC 51168 / LMG 8142 / SP-6) (Leptothrix discophora (strain SP-6)).